The chain runs to 106 residues: 3-phenylpropionate/cinnamic acid dioxygenase ferredoxin subunit (106 aa).

A Rieske domain is found at 4 to 99 (IYACPVADVP…VHVEGSDIFI (96 aa)). Positions 42, 44, 62, and 65 each coordinate [2Fe-2S] cluster.

It belongs to the bacterial ring-hydroxylating dioxygenase ferredoxin component family. In terms of assembly, this dioxygenase system consists of four proteins: the two subunits of the hydroxylase component (HcaE and HcaF), a ferredoxin (HcaC) and a ferredoxin reductase (HcaD). It depends on [2Fe-2S] cluster as a cofactor.

It participates in aromatic compound metabolism; 3-phenylpropanoate degradation. Its function is as follows. Part of the multicomponent 3-phenylpropionate dioxygenase, that converts 3-phenylpropionic acid (PP) and cinnamic acid (CI) into 3-phenylpropionate-dihydrodiol (PP-dihydrodiol) and cinnamic acid-dihydrodiol (CI-dihydrodiol), respectively. This protein seems to be a 2Fe-2S ferredoxin. The protein is 3-phenylpropionate/cinnamic acid dioxygenase ferredoxin subunit of Shigella boydii serotype 4 (strain Sb227).